Consider the following 152-residue polypeptide: Nucleoside diphosphate kinase B (152 aa).

The tract at residues methionine 1–lysine 66 is interaction with AKAP13. Positions 12, 60, 88, 94, 105, and 115 each coordinate ATP. Histidine 118 functions as the Pros-phosphohistidine intermediate in the catalytic mechanism.

This sequence belongs to the NDK family. As to quaternary structure, hexamer of two different chains: An and B (A6, A5B, A4B2, A3B3, A2B4, AB5, B6). Interacts with CAPN8. Interacts with AKAP13. Interacts with ITGB1BP1 (via C-terminal domain region). Interacts with BCL2L10. Requires Mg(2+) as cofactor.

Its subcellular location is the cytoplasm. It localises to the cell projection. The protein localises to the lamellipodium. The protein resides in the ruffle. It is found in the nucleus. The enzyme catalyses a 2'-deoxyribonucleoside 5'-diphosphate + ATP = a 2'-deoxyribonucleoside 5'-triphosphate + ADP. It catalyses the reaction a ribonucleoside 5'-diphosphate + ATP = a ribonucleoside 5'-triphosphate + ADP. It carries out the reaction ATP + protein L-histidine = ADP + protein N-phospho-L-histidine.. In terms of biological role, major role in the synthesis of nucleoside triphosphates other than ATP. The ATP gamma phosphate is transferred to the NDP beta phosphate via a ping-pong mechanism, using a phosphorylated active-site intermediate. Negatively regulates Rho activity by interacting with AKAP13/LBC. Acts as a transcriptional activator of the MYC gene; binds DNA non-specifically. Binds to both single-stranded guanine- and cytosine-rich strands within the nuclease hypersensitive element (NHE) III(1) region of the MYC gene promoter. Does not bind to duplex NHE III(1). Has G-quadruplex (G4) DNA-binding activity, which is independent of its nucleotide-binding and kinase activity. Binds both folded and unfolded G4 with similar low nanomolar affinities. Stabilizes folded G4s regardless of whether they are prefolded or not. Exhibits histidine protein kinase activity. This Pongo abelii (Sumatran orangutan) protein is Nucleoside diphosphate kinase B (NME2).